Here is a 258-residue protein sequence, read N- to C-terminus: Acetylglutamate kinase (258 aa).

Substrate contacts are provided by residues 44–45, Arg-66, and Asn-158; that span reads GG. Residues 181 to 186 and 209 to 211 each bind ATP; these read DVSGIL and IIT.

It belongs to the acetylglutamate kinase family. ArgB subfamily. In terms of assembly, homodimer.

It localises to the cytoplasm. The catalysed reaction is N-acetyl-L-glutamate + ATP = N-acetyl-L-glutamyl 5-phosphate + ADP. It participates in amino-acid biosynthesis; L-arginine biosynthesis; N(2)-acetyl-L-ornithine from L-glutamate: step 2/4. Its function is as follows. Catalyzes the ATP-dependent phosphorylation of N-acetyl-L-glutamate. In Salmonella arizonae (strain ATCC BAA-731 / CDC346-86 / RSK2980), this protein is Acetylglutamate kinase.